A 472-amino-acid chain; its full sequence is 2-oxoisovalerate dehydrogenase subunit alpha 2, mitochondrial (472 aa).

185–187 (QYR) is a binding site for thiamine diphosphate. 3 residues coordinate K(+): Ser-234, Thr-239, and Gln-240.

Belongs to the BCKDHA family. As to quaternary structure, heterotetramer of alpha and beta chains. It depends on thiamine diphosphate as a cofactor.

Its subcellular location is the mitochondrion matrix. The catalysed reaction is N(6)-[(R)-lipoyl]-L-lysyl-[protein] + 3-methyl-2-oxobutanoate + H(+) = N(6)-[(R)-S(8)-2-methylpropanoyldihydrolipoyl]-L-lysyl-[protein] + CO2. The branched-chain alpha-keto dehydrogenase complex catalyzes the overall conversion of alpha-keto acids to acyl-CoA and CO(2). It contains multiple copies of three enzymatic components: branched-chain alpha-keto acid decarboxylase (E1), lipoamide acyltransferase (E2) and lipoamide dehydrogenase (E3). The polypeptide is 2-oxoisovalerate dehydrogenase subunit alpha 2, mitochondrial (Arabidopsis thaliana (Mouse-ear cress)).